The sequence spans 340 residues: Protein RecA (340 aa).

An ATP-binding site is contributed by 65–72; sequence GPESGGKT.

The protein belongs to the RecA family.

Its subcellular location is the cytoplasm. In terms of biological role, can catalyze the hydrolysis of ATP in the presence of single-stranded DNA, the ATP-dependent uptake of single-stranded DNA by duplex DNA, and the ATP-dependent hybridization of homologous single-stranded DNAs. It interacts with LexA causing its activation and leading to its autocatalytic cleavage. The sequence is that of Protein RecA from Thermus thermophilus.